A 155-amino-acid chain; its full sequence is Small ribosomal subunit protein uS7cz/uS7cy (155 aa).

It belongs to the universal ribosomal protein uS7 family. In terms of assembly, part of the 30S ribosomal subunit.

The protein resides in the plastid. It localises to the chloroplast. In terms of biological role, one of the primary rRNA binding proteins, it binds directly to 16S rRNA where it nucleates assembly of the head domain of the 30S subunit. The sequence is that of Small ribosomal subunit protein uS7cz/uS7cy (rps7-A) from Morus indica (Mulberry).